A 288-amino-acid polypeptide reads, in one-letter code: Small ribosomal subunit protein uS2 (288 aa).

The protein belongs to the universal ribosomal protein uS2 family. Component of the small ribosomal subunit. Mature ribosomes consist of a small (40S) and a large (60S) subunit. The 40S subunit contains about 33 different proteins and 1 molecule of RNA (18S). The 60S subunit contains about 49 different proteins and 3 molecules of RNA (28S, 5.8S and 5S). Interacts with ribosomal protein S21.

It is found in the cytoplasm. In terms of biological role, required for the assembly and/or stability of the 40S ribosomal subunit. Required for the processing of the 20S rRNA-precursor to mature 18S rRNA in a late step of the maturation of 40S ribosomal subunits. The sequence is that of Small ribosomal subunit protein uS2 from Aedes aegypti (Yellowfever mosquito).